The primary structure comprises 312 residues: Olfactory receptor 4F15 (312 aa).

At 1–25 (MNGMNHSVVSEFVFMGLTNSREIQL) the chain is on the extracellular side. The N-linked (GlcNAc...) asparagine glycan is linked to asparagine 5. A helical membrane pass occupies residues 26-49 (LLFVFSLLFYFASMMGNLVIVFTV). Residues 50–57 (TMDAHLHS) lie on the Cytoplasmic side of the membrane. A helical membrane pass occupies residues 58-79 (PMYFLLANLSIIDMAFCSITAP). Topologically, residues 80–100 (KMICDIFKKHKAISFRGCITQ) are extracellular. A disulfide bond links cysteine 97 and cysteine 189. Residues 101–120 (IFFSHALGGTEMVLLIAMAF) form a helical membrane-spanning segment. Residues 121 to 139 (DRYMAICKPLHYLTIMSPR) lie on the Cytoplasmic side of the membrane. Residues 140 to 158 (MCLYFLATSSIIGLIHSLV) traverse the membrane as a helical segment. Residues 159 to 195 (QLVFVVDLPFCGPNIFDSFYCDLPRLLRLACTNTQEL) are Extracellular-facing. A helical membrane pass occupies residues 196-219 (EFMVTVNSGLISVGSFVLLVISYI). At 220-235 (FILFTVWKHSSGGLAK) the chain is on the cytoplasmic side. The helical transmembrane segment at 236–258 (ALSTLSAHVTVVILFFGPLMFFY) threads the bilayer. At 259 to 269 (TWPSPTSHLDK) the chain is on the extracellular side. The chain crosses the membrane as a helical span at residues 270 to 289 (YLAIFDAFITPFLNPVIYTF). At 290–312 (RNKDMKVAMRRLCSRLAHFTKIL) the chain is on the cytoplasmic side.

This sequence belongs to the G-protein coupled receptor 1 family.

Its subcellular location is the cell membrane. Functionally, odorant receptor. The polypeptide is Olfactory receptor 4F15 (OR4F15) (Homo sapiens (Human)).